Consider the following 700-residue polypeptide: Polyribonucleotide nucleotidyltransferase (700 aa).

Positions 485 and 491 each coordinate Mg(2+). Residues 552 to 611 form the KH domain; sequence PRITVIKINPEKIRDVIGKGGAVIRALTEETGTTIELEDDGTVKIASSNGEATKEAIRRI. The region spanning 621 to 689 is the S1 motif domain; sequence GRIYNGKVIR…RQGRVRLSIK (69 aa).

It belongs to the polyribonucleotide nucleotidyltransferase family. In terms of assembly, component of the RNA degradosome, which is a multiprotein complex involved in RNA processing and mRNA degradation. Mg(2+) serves as cofactor.

The protein resides in the cytoplasm. It catalyses the reaction RNA(n+1) + phosphate = RNA(n) + a ribonucleoside 5'-diphosphate. Its function is as follows. Involved in mRNA degradation. Catalyzes the phosphorolysis of single-stranded polyribonucleotides processively in the 3'- to 5'-direction. The protein is Polyribonucleotide nucleotidyltransferase of Shewanella baltica (strain OS185).